A 220-amino-acid polypeptide reads, in one-letter code: DNA mismatch repair protein MutH (220 aa).

Belongs to the MutH family.

It is found in the cytoplasm. Its function is as follows. Sequence-specific endonuclease that cleaves unmethylated GATC sequences. It is involved in DNA mismatch repair. The protein is DNA mismatch repair protein MutH of Buchnera aphidicola subsp. Baizongia pistaciae (strain Bp).